A 592-amino-acid polypeptide reads, in one-letter code: Aspartate--tRNA ligase (592 aa).

Residue E171 participates in L-aspartate binding. Positions 195–198 are aspartate; the sequence is QLFK. R217 lines the L-aspartate pocket. ATP-binding positions include 217 to 219 and Q226; that span reads RDE. Position 448 (H448) interacts with L-aspartate. E482 is a binding site for ATP. Residue R489 participates in L-aspartate binding. Position 534-537 (534-537) interacts with ATP; the sequence is GLDR.

This sequence belongs to the class-II aminoacyl-tRNA synthetase family. Type 1 subfamily. In terms of assembly, homodimer.

Its subcellular location is the cytoplasm. The catalysed reaction is tRNA(Asp) + L-aspartate + ATP = L-aspartyl-tRNA(Asp) + AMP + diphosphate. In terms of biological role, catalyzes the attachment of L-aspartate to tRNA(Asp) in a two-step reaction: L-aspartate is first activated by ATP to form Asp-AMP and then transferred to the acceptor end of tRNA(Asp). The chain is Aspartate--tRNA ligase from Vibrio vulnificus (strain CMCP6).